Reading from the N-terminus, the 161-residue chain is Protein-export protein SecB (161 aa).

It belongs to the SecB family. As to quaternary structure, homotetramer, a dimer of dimers. One homotetramer interacts with 1 SecA dimer.

It is found in the cytoplasm. Functionally, one of the proteins required for the normal export of preproteins out of the cell cytoplasm. It is a molecular chaperone that binds to a subset of precursor proteins, maintaining them in a translocation-competent state. It also specifically binds to its receptor SecA. The sequence is that of Protein-export protein SecB from Ectopseudomonas mendocina (strain ymp) (Pseudomonas mendocina).